Reading from the N-terminus, the 326-residue chain is PDZ domain-containing protein MAGIX (326 aa).

The segment at 1-32 (MDSHAGNTADPRGSRRGVGLQGSGSPRARQLL) is disordered. The PDZ domain maps to 128–212 (SVELVRGPAG…RLCLVLQRPQ (85 aa)). The segment at 214 to 267 (MNGSRSKEVGGGHQKTDRIPDPRGGRMMESRGTISPVHHRPKTRTGPGPSPESV) is disordered. Over residues 218–242 (RSKEVGGGHQKTDRIPDPRGGRMME) the composition is skewed to basic and acidic residues. Ser-263 is subject to Phosphoserine.

The polypeptide is PDZ domain-containing protein MAGIX (Magix) (Rattus norvegicus (Rat)).